A 398-amino-acid chain; its full sequence is Phospholipase C (398 aa).

Positions 1–26 (MKALKKVSNILCVLGLCTLMGGTSYA) are cleaved as a signal peptide. Zn(2+) contacts are provided by tryptophan 27, histidine 37, aspartate 82, histidine 94, histidine 152, aspartate 156, histidine 162, histidine 174, and glutamate 178. The Zn-dependent PLC domain maps to 27–276 (WDGKKDGTGT…NEVSNGNTGD (250 aa)). The interval 273-281 (NTGDNDSLT) is linker. The 117-residue stretch at 282–398 (NEFNIVLKTA…TGNETYYINK (117 aa)) folds into the PLAT domain. The Ca(2+) site is built by glycine 297, threonine 298, aspartate 299, aspartate 319, asparagine 320, glycine 322, asparagine 323, aspartate 324, and aspartate 363.

It belongs to the bacterial zinc-metallophospholipase C family. Ca(2+) serves as cofactor. Zn(2+) is required as a cofactor.

The protein resides in the secreted. The catalysed reaction is a 1,2-diacyl-sn-glycero-3-phosphocholine + H2O = phosphocholine + a 1,2-diacyl-sn-glycerol + H(+). Its function is as follows. Bacterial hemolysins are exotoxins that attack blood cell membranes and cause cell rupture. Binds to eukaryotic membranes where it hydrolyzes phosphatidylcholine. This enzyme has 10-fold less activity towards sphingomyelin than its C.perfringens counterpart, is approximately 100-fold less hemolytic against mouse erythrocytes and at least 100-fold less toxic in mice. The polypeptide is Phospholipase C (plc) (Paraclostridium bifermentans (Clostridium bifermentans)).